A 523-amino-acid polypeptide reads, in one-letter code: Protein NAM8 (523 aa).

Residues 1-35 (MSYKQTTYYPSRGNLVRNDSSPYTNTISSETNNSS) form a disordered region. Low complexity predominate over residues 24 to 35 (TNTISSETNNSS). RRM domains lie at 54-145 (NQLY…WATS), 163-242 (CSIF…PTSG), and 313-385 (TTVF…WGRS). The tract at residues 239–260 (PTSGQQQHVSGNNDYNRSSSSL) is disordered. Over residues 240–260 (TSGQQQHVSGNNDYNRSSSSL) the composition is skewed to polar residues.

In terms of assembly, component of the U1 small nuclear ribonucleoprotein complex (U1 snRNP).

In terms of biological role, component of the U1 small nuclear ribonucleoprotein complex (U1 snRNP) involved in the initiation of meiotic recombination. Involved in the formation of DSBs at recombination hot-spots through meiosis-specific splicing of REC107 pre-mRNA. Collaborates with MER1 to promote splicing of essential meiotic mRNAs REC10, AMA1, MER3, HFM1, SPO22 and PCH2. NAM8 interacts with the pre-mRNA downstream of the 5' splice site, in a region of non-conserved sequence and is required for efficient splicing of uncapped RNA precursor. The protein is Protein NAM8 of Saccharomyces cerevisiae (strain ATCC 204508 / S288c) (Baker's yeast).